Here is a 254-residue protein sequence, read N- to C-terminus: Putative electron transfer flavoprotein subunit YdiQ (254 aa).

This sequence belongs to the ETF beta-subunit/FixA family. YdiR and YdiQ form a heterodimer.

In terms of biological role, may play a role in a redox process. The protein is Putative electron transfer flavoprotein subunit YdiQ (ydiQ) of Escherichia coli (strain K12).